A 254-amino-acid chain; its full sequence is MERKSYVFGNWKMHKTAKEAKDFLSIFCPFVKEISPASLVGIAPAFTTLSACCESIKEMDSSIWLGAQNVHQDSSGAFTGEVSLPMLQEFHVNFVLLGHSECRHIFHEEDATIALKVGAAARSGVVPVLCIGETLEARENGTTKEVLSNQLMLGLAQLPETAPVIIAYEPVWAIGTGKVASTADVQEVHAFCREVLSRIFSKEKSEIISILYGGSVKADNAEGFARCPDVDGLLVGGASLDPQGFANVLRNFNL.

10 to 12 (NWK) contacts substrate. Histidine 99 (electrophile) is an active-site residue. Glutamate 169 acts as the Proton acceptor in catalysis. Residues glycine 175, serine 215, and 236–237 (GG) each bind substrate.

The protein belongs to the triosephosphate isomerase family. Homodimer.

The protein resides in the cytoplasm. It carries out the reaction D-glyceraldehyde 3-phosphate = dihydroxyacetone phosphate. It participates in carbohydrate biosynthesis; gluconeogenesis. The protein operates within carbohydrate degradation; glycolysis; D-glyceraldehyde 3-phosphate from glycerone phosphate: step 1/1. Its function is as follows. Involved in the gluconeogenesis. Catalyzes stereospecifically the conversion of dihydroxyacetone phosphate (DHAP) to D-glyceraldehyde-3-phosphate (G3P). The chain is Triosephosphate isomerase from Chlamydia caviae (strain ATCC VR-813 / DSM 19441 / 03DC25 / GPIC) (Chlamydophila caviae).